The sequence spans 425 residues: Serine--tRNA ligase (425 aa).

Residue 233-235 coordinates L-serine; that stretch reads TAE. ATP-binding positions include 264–266 and V280; that span reads RRE. L-serine is bound at residue E287. 351 to 354 contributes to the ATP binding site; sequence EVSS. Position 387 (S387) interacts with L-serine.

This sequence belongs to the class-II aminoacyl-tRNA synthetase family. Type-1 seryl-tRNA synthetase subfamily. As to quaternary structure, homodimer. The tRNA molecule binds across the dimer.

The protein resides in the cytoplasm. It catalyses the reaction tRNA(Ser) + L-serine + ATP = L-seryl-tRNA(Ser) + AMP + diphosphate + H(+). The enzyme catalyses tRNA(Sec) + L-serine + ATP = L-seryl-tRNA(Sec) + AMP + diphosphate + H(+). It participates in aminoacyl-tRNA biosynthesis; selenocysteinyl-tRNA(Sec) biosynthesis; L-seryl-tRNA(Sec) from L-serine and tRNA(Sec): step 1/1. Catalyzes the attachment of serine to tRNA(Ser). Is also able to aminoacylate tRNA(Sec) with serine, to form the misacylated tRNA L-seryl-tRNA(Sec), which will be further converted into selenocysteinyl-tRNA(Sec). This Gemmatimonas aurantiaca (strain DSM 14586 / JCM 11422 / NBRC 100505 / T-27) protein is Serine--tRNA ligase.